Reading from the N-terminus, the 140-residue chain is Sex-regulated protein janus-B (140 aa).

A substrate-binding site is contributed by Arg-42. Catalysis depends on His-69, which acts as the Proton acceptor. 110–112 (SRT) lines the substrate pocket.

The protein belongs to the janus family. Germline cells of adult males.

Its function is as follows. JanA and janB regulate somatic sex differentiation. This is Sex-regulated protein janus-B (janB) from Drosophila melanogaster (Fruit fly).